A 114-amino-acid polypeptide reads, in one-letter code: Putative pterin-4-alpha-carbinolamine dehydratase (114 aa).

This sequence belongs to the pterin-4-alpha-carbinolamine dehydratase family.

The enzyme catalyses (4aS,6R)-4a-hydroxy-L-erythro-5,6,7,8-tetrahydrobiopterin = (6R)-L-erythro-6,7-dihydrobiopterin + H2O. The chain is Putative pterin-4-alpha-carbinolamine dehydratase from Chlorobium luteolum (strain DSM 273 / BCRC 81028 / 2530) (Pelodictyon luteolum).